Consider the following 843-residue polypeptide: MKAMSLVFLVGLIGEFQVFSSASSPVNCQWDSYAPWSECNGCTKTQTRRRPVAVYGQYGGHPCVGSTFETQSCEPTRGCPTEEGCGERFRCFSGQCISKSLVCNGDSDCEEDSADEDRCEDSESRPSCDLSKPPPNIELTGNGYNALTGQFRNRVLNTKSFGGQCRKVFSGDGRDFYRLSGNVLSYTFQVKVNNDFNYEFYNSTWSYAKHTSTEHTSSSKGRVFIFSSSSSSSSYYAKTYEILKKKSYQLLVVQNTVEVAQFINNNPEFLQLAESFWKELSYLPPLYDYSAYRRLIDQYGTHYLQSGSLGGEYKVLFYVDSEKVAESDLGSEDKKKCASSHISFLFKSSKHKCKAMEEALKSASGTQSNVLRGVPFVRGGRPGFVSGLSYLELDNPDGNKQRYSSWAGSVTDLPQVIKQKLTPLYELVKEVPCASVKRLYLKRALEEYLDEFDSCHCQPCQNGGMASVEGTQCQCHCKPNTFGVACEQGVLVGDHAGGIDGGWSCWSSWGPCAQGKKTRSRKCNNPPPSGGGKSCIGETSESRQCEDEDLEHLRLLEPHCFPLSLVPTEFCPSPPALKDGFVQNEETTFPVGKNIVYSCNEGYSLVGDPVARCGEDLQWTVGKMHCQKIACVLPTLMRGLQSHPQKPFYTVGEKVTFSCSSGMSLEGPSTFLCGSSLKWSPEMKNVQCVRKEAPLAKKVPECQLWEKLQNSKCVCKMPYECGSSLDVCARDERSKRILRLTVCKMHVLQCQGRNYTLSVGETCTLPGSAEKACGACPLWEKCDAQSSKCVCRAASECEEAGFRVCVEVNGREQTMTECEAGVLRCLGLSITVTSIRPCAPEAP.

An N-terminal signal peptide occupies residues 1–22 (MKAMSLVFLVGLIGEFQVFSSA). The TSP type-1 1 domain occupies 27–80 (NCQWDSYAPWSECNGCTKTQTRRRPVAVYGQYGGHPCVGSTFETQSCEPTRGCP). 7 disulfides stabilise this stretch: Cys-28/Cys-63, Cys-39/Cys-73, Cys-42/Cys-79, Cys-85/Cys-96, Cys-91/Cys-109, Cys-103/Cys-119, and Cys-128/Cys-165. Trp-36 carries a C-linked (Man) tryptophan glycan. In terms of domain architecture, LDL-receptor class A spans 83-121 (EGCGERFRCFSGQCISKSLVCNGDSDCEEDSADEDRCED). The interval 105–142 (GDSDCEEDSADEDRCEDSESRPSCDLSKPPPNIELTGN) is disordered. The span at 107 to 120 (SDCEEDSADEDRCE) shows a compositional bias: acidic residues. The region spanning 124–456 (SRPSCDLSKP…EYLDEFDSCH (333 aa)) is the MACPF domain. A glycan (N-linked (GlcNAc...) asparagine) is linked at Asn-202. Disulfide bonds link Cys-337-Cys-353, Cys-433-Cys-560, Cys-455-Cys-505, Cys-457-Cys-473, Cys-460-Cys-475, Cys-477-Cys-486, Cys-512-Cys-545, Cys-523-Cys-535, Cys-571-Cys-613, Cys-599-Cys-626, Cys-631-Cys-673, Cys-659-Cys-688, Cys-702-Cys-713, Cys-715-Cys-750, Cys-721-Cys-743, Cys-728-Cys-763, Cys-773-Cys-782, Cys-776-Cys-789, Cys-791-Cys-825, Cys-797-Cys-818, and Cys-805-Cys-838. Positions 457–487 (CQPCQNGGMASVEGTQCQCHCKPNTFGVACE) constitute an EGF-like domain. Residues 500 to 549 (DGGWSCWSSWGPCAQGKKTRSRKCNNPPPSGGGKSCIGETSESRQCEDED) enclose the TSP type-1 2 domain. Trp-503, Trp-506, and Trp-509 each carry a C-linked (Man) tryptophan glycan. The interval 516–539 (KKTRSRKCNNPPPSGGGKSCIGET) is disordered. CCP regions lie at residues 545–615 (CEDE…RCGE) and 616–693 (DLQW…RKEA). Sushi domains are found at residues 569 to 628 (EFCP…HCQK) and 629 to 690 (IACV…QCVR). 2 factor I module (FIM) regions span residues 695–770 (LAKK…GSAE) and 771–843 (KACG…PEAP). Residue Asn-754 is glycosylated (N-linked (GlcNAc...) asparagine).

Belongs to the complement C6/C7/C8/C9 family. Monomer or dimer; as a C5b-7 complex it can also form multimeric rosettes. Component of the membrane attack complex (MAC), composed of complement C5b, C6, C7, C8A, C8B, C8G and multiple copies of the pore-forming subunit C9. Post-translationally, C-, N- and O-glycosylated. O-glycosylated with core 1 or possibly core 8 glycans. As to expression, detected in plasma (at protein level). Bone marrow, heart, intestine, lung, spleen, kidney, liver and thymus.

The protein localises to the secreted. It is found in the target cell membrane. Membrane attack complex (MAC) assembly is inhibited by CD59, thereby protecting self-cells from damage during complement activation. MAC assembly is also inhibited by clusterin (CLU) chaperones that inhibit polymerization of C9. Its function is as follows. Component of the membrane attack complex (MAC), a multiprotein complex activated by the complement cascade, which inserts into a target cell membrane and forms a pore, leading to target cell membrane rupture and cell lysis. The MAC is initiated by proteolytic cleavage of C5 into complement C5b in response to the classical, alternative, lectin and GZMK complement pathways. The complement pathways consist in a cascade of proteins that leads to phagocytosis and breakdown of pathogens and signaling that strengthens the adaptive immune system. C7 serves as a membrane anchor. During MAC assembly, associates with C5b and C6 to form the C5b-7 complex, a key lipophilic precursor of the MAC complex, which associates with the outer leaflet and reduces the energy for membrane bending. The chain is Complement component C7 (C7) from Sus scrofa (Pig).